The sequence spans 146 residues: Hemoglobin subunit beta (146 aa).

Residues 2–146 (QWTAEEKQLI…VAHALARKYH (145 aa)) form the Globin domain. Heme b contacts are provided by His63 and His92.

It belongs to the globin family. As to quaternary structure, heterotetramer of two alpha chains and two beta chains. In terms of tissue distribution, red blood cells.

Functionally, involved in oxygen transport from the lung to the various peripheral tissues. This chain is Hemoglobin subunit beta (HBB), found in Apus apus (Common swift).